Reading from the N-terminus, the 534-residue chain is MKITTLVASILMSVLLEPVIASFIDTGKDTSAYNRPLIHLTPNVGWLNDPNGLFYDKKTSVWHAYYQYNPNDTIWGQPLYWGHSSSKDLTHWEEHQVALGPQNDDEGIFSGSIVIDYNNTSGFFDESIDKDQRVVAIYTNSIPDTQTQDIAYSLDGGETFTKYKKNPVIDVNSTQFRDPKVFWHEETNKWIMVVSKSQEYKIQIFGSLDLKTWDLHSNFTSGYLGNQYECPGLIKVPIENTNDYKWVMFLAINPGSPAGGSSNQYFIGEFDGFEFKQDDSITRVMDAGKDFYAFQTFSDNEQDVIGLAWASNWQYANVVPTNPWRSSMSLARKYTLGYVNQNVETKIMTLIQTPILNNLDVINKVEKNNHLLTKNDSVITNFSSSTGLLDFNTTFKVVGESIDSNSLSNIEILIHSQMSNSSTESIKVGFDRSVSAFYFNRDIPNVEFNNNPYFTNKFSTYVEPSHYDEDDMPVYKIYGIVDKNILELYFNDGTQTMTNTFFMSEDKYPHQIEIASNVDGQFELQSLLIRELNN.

Residues 1-21 (MKITTLVASILMSVLLEPVIA) form the signal peptide. Residues 46–49 (WLND) and Gln-67 contribute to the substrate site. Asp-49 is a catalytic residue. Asn-71 carries an N-linked (GlcNAc...) asparagine glycan. Residue 109–110 (FS) coordinates substrate. N-linked (GlcNAc...) asparagine glycosylation is found at Asn-118, Asn-119, and Asn-172. 177-178 (RD) is a binding site for substrate. Asn-218 carries an N-linked (GlcNAc...) asparagine glycan. Substrate is bound by residues Glu-229 and Trp-313. 4 N-linked (GlcNAc...) asparagine glycosylation sites follow: Asn-375, Asn-381, Asn-392, and Asn-420.

Belongs to the glycosyl hydrolase 32 family.

It carries out the reaction Hydrolysis of terminal non-reducing beta-D-fructofuranoside residues in beta-D-fructofuranosides.. This chain is Invertase (INV), found in Debaryomyces hansenii (strain ATCC 36239 / CBS 767 / BCRC 21394 / JCM 1990 / NBRC 0083 / IGC 2968) (Yeast).